We begin with the raw amino-acid sequence, 129 residues long: Small ribosomal subunit protein uS8 (129 aa).

Belongs to the universal ribosomal protein uS8 family. In terms of assembly, part of the 30S ribosomal subunit. Contacts proteins S5 and S12.

One of the primary rRNA binding proteins, it binds directly to 16S rRNA central domain where it helps coordinate assembly of the platform of the 30S subunit. The chain is Small ribosomal subunit protein uS8 from Dichelobacter nodosus (strain VCS1703A).